Consider the following 212-residue polypeptide: CRIB domain-containing protein RIC6 (212 aa).

The 14-residue stretch at 34-47 folds into the CRIB domain; the sequence is IGNPTDVKHVAHIG. Residues 51 to 212 form a disordered region; it reads PSANATAPSW…MPQFDNRDDF (162 aa). Polar residues predominate over residues 53–65; sequence ANATAPSWMTEFN. Positions 106 to 121 are enriched in basic and acidic residues; that stretch reads AASEKGSPTKDKSSDK. Residues 192–202 show a composition bias toward polar residues; sequence EYMSETGSVRS.

As to quaternary structure, interacts with ARAC11/ROP1. As to expression, expressed in flowers and pollen.

It is found in the cell membrane. Functions as a downstream effector of Rho-related GTP binding proteins of the 'Rho of Plants' (ROPs) family. Participates in the propagation of ROP GTPase signals in specific cellular responses. Is involved in pollen tube growth regulation through its interaction with ARAC11/ROP1. In Arabidopsis thaliana (Mouse-ear cress), this protein is CRIB domain-containing protein RIC6 (RIC6).